The following is a 1045-amino-acid chain: 3-hydroxy-3-methylglutaryl-coenzyme A reductase 2 (1045 aa).

Residues 1 to 24 are Cytoplasmic-facing; sequence MSLPLKTIVHLVKPFACTARFSAR. The chain crosses the membrane as a helical span at residues 25–45; that stretch reads YPIHVIVVAVLLSAAAYLSVT. Over 46–186 the chain is Lumenal; the sequence is QSYLNEWKLD…FSNKTSEFDQ (141 aa). N-linked (GlcNAc...) asparagine glycans are attached at residues N115, N150, N158, and N179. The chain crosses the membrane as a helical span at residues 187–207; that stretch reads FDLFIILAAYLTLFYTLCCLF. Residues 188 to 356 enclose the SSD domain; sequence DLFIILAAYL…ATFYSAILSM (169 aa). Residues 208–216 lie on the Cytoplasmic side of the membrane; the sequence is NDMRKIGSK. Residues 217-237 traverse the membrane as a helical segment; that stretch reads FWLSFSALSNSACALYLSLYT. The Lumenal segment spans residues 238–243; it reads THSLLK. Residues 244–264 form a helical membrane-spanning segment; it reads KPASLLSLVIGLPFIVVIIGF. At 265–301 the chain is on the cytoplasmic side; it reads KHKVRLAAFSLQKFHRISIDKKITVSNIIYEAMFQEG. Residues 302 to 322 traverse the membrane as a helical segment; sequence AYLIRDYLFYISSFIGCAIYA. At 323–324 the chain is on the lumenal side; sequence RH. Residues 325–345 form a helical membrane-spanning segment; sequence LPGLVNFCILSTFMLVFDLLL. Topologically, residues 346 to 402 are cytoplasmic; the sequence is SATFYSAILSMKLEINIIHRSTVIRQTLEEDGVVPTTADIIYKDETASEPHFLRSNV. The helical transmembrane segment at 403–423 threads the bilayer; sequence AIILGKASVIGLLLLINLYVF. Over 424–497 the chain is Lumenal; that stretch reads TDKLNATILN…DSVSNAIRDQ (74 aa). 2 N-linked (GlcNAc...) asparagine glycosylation sites follow: N428 and N455. A helical transmembrane segment spans residues 498–518; sequence FISKLLFFAFAVSISINVYLL. The Cytoplasmic portion of the chain corresponds to 519–1045; that stretch reads NAAKIHTGYM…GPPCKTSALL (527 aa). Residue T565 is modified to Phosphothreonine. E710 functions as the Charge relay system in the catalytic mechanism. 716–722 is a CoA binding site; it reads SAMRGCK. NADP(+)-binding positions include 777–779 and 804–812; these read SRF and DAMGMNMIS. The Charge relay system role is filled by K844. A CoA-binding site is contributed by 873-875; the sequence is VLK. D920 functions as the Charge relay system in the catalytic mechanism. CoA is bound at residue 1015 to 1016; the sequence is SH. H1016 (proton donor) is an active-site residue. The tract at residues 1018-1045 is disordered; the sequence is THNRKTNKANELPQPSNKGPPCKTSALL. An NADP(+)-binding site is contributed by 1020 to 1021; it reads NR.

The protein belongs to the HMG-CoA reductase family.

The protein localises to the endoplasmic reticulum membrane. It is found in the nucleus envelope. The catalysed reaction is (R)-mevalonate + 2 NADP(+) + CoA = (3S)-3-hydroxy-3-methylglutaryl-CoA + 2 NADPH + 2 H(+). The protein operates within metabolic intermediate biosynthesis; (R)-mevalonate biosynthesis; (R)-mevalonate from acetyl-CoA: step 3/3. Functionally, HMG-CoA reductase; part of the first module of ergosterol biosynthesis pathway constitutes by the early steps of the pathway, conserved across all eukaryotes, and which results in the formation of mevalonate from acetyl-coenzyme A (acetyl-CoA). HMG1 and HMG2 catalyze the reduction of hydroxymethylglutaryl-CoA (HMG-CoA) to mevalonate that is the rate-limiting step within the first mosule. The first module starts with the action of the cytosolic acetyl-CoA acetyltransferase ERG10 that catalyzes the formation of acetoacetyl-CoA. The hydroxymethylglutaryl-CoA synthase ERG13 then condenses acetyl-CoA with acetoacetyl-CoA to form HMG-CoA. The rate-limiting step of the early module is the reduction to mevalonate by the 3-hydroxy-3-methylglutaryl-coenzyme A (HMG-CoA) reductases HMG1 and HMG2 which are derived from a single ancestral HMGR gene by gene duplication. The sequence is that of 3-hydroxy-3-methylglutaryl-coenzyme A reductase 2 from Saccharomyces cerevisiae (strain ATCC 204508 / S288c) (Baker's yeast).